The sequence spans 147 residues: 3-dehydroquinate dehydratase (147 aa).

The Proton acceptor role is filled by Y24. Substrate is bound by residues N75, H81, and D88. The active-site Proton donor is the H101. Substrate-binding positions include 102–103 (IS) and R112.

The protein belongs to the type-II 3-dehydroquinase family. In terms of assembly, homododecamer.

It carries out the reaction 3-dehydroquinate = 3-dehydroshikimate + H2O. It functions in the pathway metabolic intermediate biosynthesis; chorismate biosynthesis; chorismate from D-erythrose 4-phosphate and phosphoenolpyruvate: step 3/7. Catalyzes a trans-dehydration via an enolate intermediate. This chain is 3-dehydroquinate dehydratase, found in Cereibacter sphaeroides (strain KD131 / KCTC 12085) (Rhodobacter sphaeroides).